Here is a 264-residue protein sequence, read N- to C-terminus: Wtf element wtf11 (264 aa).

The segment covering 1–12 (MNSNYVPLTSSV) has biased composition (polar residues). Positions 1 to 26 (MNSNYVPLTSSVDVEEKMESENGVDL) are disordered. A run of 4 helical transmembrane segments spans residues 107-127 (LLFV…VIFG), 145-165 (LSWF…YDFW), 180-200 (WKNT…GFFV), and 217-237 (SLFA…FETL).

Belongs to the WTF family.

The protein localises to the membrane. May act in meiotic drive. The sequence is that of Wtf element wtf11 from Schizosaccharomyces pombe (strain 972 / ATCC 24843) (Fission yeast).